Consider the following 489-residue polypeptide: CUGBP Elav-like family member 1-A (489 aa).

3 RRM domains span residues 16–99 (IKMF…PADS), 108–188 (RKLF…FADT), and 404–482 (ANLF…LKRS). Residues 183–210 (VKFADTQKDKEQKRMTQQLQQQMQQLNA) are necessary for oligomerization and EDEN-dependent deadenylation.

Belongs to the CELF/BRUNOL family. In terms of assembly, oligomer. Oligomerization is required for RNA-binding and EDEN-dependent deadenylation. Phosphorylated during oocyte maturation and dephosphorylated following egg activation. Dephosphorylation is calcium dependent and correlates with the increase in the activity of EDEN-dependent deadenylation.

Its subcellular location is the nucleus. The protein localises to the cytoplasm. Functionally, RNA-binding protein implicated in the regulation of several post-transcriptional events. May be involved in pre-mRNA alternative splicing, mRNA translation activation and stability. Mediates the rapid and sequence-specific cytoplasmic deadenylation of EDEN-containing maternal mRNAs following fertilization. Binds to AU-rich sequences (AREs) of jun mRNA. Binds to the embryonic deadenylation element (EDEN) motif localized in the 3'-UTR of maternal mRNAs. Binds to RNA containing several repeats of the consensus sequence 5'-UGU-3'. EDEN-dependent deadenylation is enhanced by the presence of an additional cis element composed of three AUU repeats. The polypeptide is CUGBP Elav-like family member 1-A (cugbp1-a) (Xenopus laevis (African clawed frog)).